A 547-amino-acid polypeptide reads, in one-letter code: Chaperonin GroEL (547 aa).

ATP is bound by residues 30–33 (TLGP), K51, 87–91 (DGTTT), G415, and D495.

The protein belongs to the chaperonin (HSP60) family. Forms a cylinder of 14 subunits composed of two heptameric rings stacked back-to-back. Interacts with the co-chaperonin GroES.

The protein resides in the cytoplasm. It carries out the reaction ATP + H2O + a folded polypeptide = ADP + phosphate + an unfolded polypeptide.. Its function is as follows. Together with its co-chaperonin GroES, plays an essential role in assisting protein folding. The GroEL-GroES system forms a nano-cage that allows encapsulation of the non-native substrate proteins and provides a physical environment optimized to promote and accelerate protein folding. This chain is Chaperonin GroEL, found in Ralstonia nicotianae (strain ATCC BAA-1114 / GMI1000) (Ralstonia solanacearum).